The primary structure comprises 283 residues: Thymidylate synthase (283 aa).

A dUMP-binding site is contributed by Arg-22. Residue Cys-160 is the Nucleophile of the active site. Residues 180–183 (RSCD), Asn-191, and 221–223 (HIY) contribute to the dUMP site. Asp-183 contacts (6R)-5,10-methylene-5,6,7,8-tetrahydrofolate. Residue Ser-282 coordinates (6R)-5,10-methylene-5,6,7,8-tetrahydrofolate.

This sequence belongs to the thymidylate synthase family. Bacterial-type ThyA subfamily. As to quaternary structure, homodimer.

It is found in the cytoplasm. It carries out the reaction dUMP + (6R)-5,10-methylene-5,6,7,8-tetrahydrofolate = 7,8-dihydrofolate + dTMP. The protein operates within pyrimidine metabolism; dTTP biosynthesis. Catalyzes the reductive methylation of 2'-deoxyuridine-5'-monophosphate (dUMP) to 2'-deoxythymidine-5'-monophosphate (dTMP) while utilizing 5,10-methylenetetrahydrofolate (mTHF) as the methyl donor and reductant in the reaction, yielding dihydrofolate (DHF) as a by-product. This enzymatic reaction provides an intracellular de novo source of dTMP, an essential precursor for DNA biosynthesis. The protein is Thymidylate synthase of Actinobacillus succinogenes (strain ATCC 55618 / DSM 22257 / CCUG 43843 / 130Z).